A 247-amino-acid polypeptide reads, in one-letter code: MNVLPCSINTLKGLYEISGVEVGQHFYWQIGGFQVHAQVLITSWVVIAILLGSAAIAVRNPQTIPTDGQNFFEYVLEFIRDLSKTQIGEEYGPWVPFIGTMFLFIFVSNWSGALLPWKIIQLPHGELAAPTNDINTTVALALPTSVAYFYAGLTKKGLGYFGKYIQPTPILLPINILEDFTKPLSLSFRLFGNILADELVVVVLVSLVPSVVPIPVMFLGLFTSSIQALIFATLAAAYIGESMEGHH.

Helical transmembrane passes span 38-58 (QVLI…AIAV), 95-115 (VPFI…GALL), 134-154 (INTT…AGLT), 199-219 (LVVV…VMFL), and 220-240 (GLFT…AYIG).

The protein belongs to the ATPase A chain family. As to quaternary structure, F-type ATPases have 2 components, CF(1) - the catalytic core - and CF(0) - the membrane proton channel. CF(1) has five subunits: alpha(3), beta(3), gamma(1), delta(1), epsilon(1). CF(0) has four main subunits: a, b, b' and c.

The protein resides in the plastid. It localises to the chloroplast thylakoid membrane. Functionally, key component of the proton channel; it plays a direct role in the translocation of protons across the membrane. The protein is ATP synthase subunit a, chloroplastic of Illicium oligandrum (Star anise).